The sequence spans 284 residues: RNase adapter protein RapZ (284 aa).

Residue 8-15 (GRSGSGKS) coordinates ATP. Position 56–59 (56–59 (DVRN)) interacts with GTP. An RNA-binding region spans residues 266 to 284 (RSRGKNVQSRHRTLEKRKQ).

Belongs to the RapZ-like family. RapZ subfamily. In terms of assembly, homotrimer.

Modulates the synthesis of GlmS, by affecting the processing and stability of the regulatory small RNA GlmZ. When glucosamine-6-phosphate (GlcN6P) concentrations are high in the cell, RapZ binds GlmZ and targets it to cleavage by RNase E. Consequently, GlmZ is inactivated and unable to activate GlmS synthesis. Under low GlcN6P concentrations, RapZ is sequestered and inactivated by an other regulatory small RNA, GlmY, preventing GlmZ degradation and leading to synthesis of GlmS. In Serratia proteamaculans (strain 568), this protein is RNase adapter protein RapZ.